Here is a 274-residue protein sequence, read N- to C-terminus: Large ribosomal subunit protein uL2cz/uL2cy (274 aa).

Positions 224 to 274 (NPVDHPHGGGEGRAPIGRKKPATPWGYPALGRRSRKRNKYSDNLILRRRSK) are disordered.

This sequence belongs to the universal ribosomal protein uL2 family. Part of the 50S ribosomal subunit.

The protein localises to the plastid. The protein resides in the chloroplast. The chain is Large ribosomal subunit protein uL2cz/uL2cy (rpl2-A) from Carica papaya (Papaya).